The chain runs to 518 residues: Zinc finger protein 449 (518 aa).

An SCAN box domain is found at 30–112 (RQRFRQFQYR…SLIEDLQREL (83 aa)). Residues 292–304 (NPTLGETPENSNL) show a composition bias toward polar residues. The tract at residues 292-325 (NPTLGETPENSNLEEPLNPKPHKKKSPGEKPHRC) is disordered. C2H2-type zinc fingers lie at residues 323–345 (HRCPQCGKCFARKSQLTGHQRIH), 351–373 (HKCPECGKRFLRSSDLYRHQRLH), 379–401 (YECTVCKKRFTRRSHLIGHQRTH), 407–429 (YKCLECGKSFCHGSSLKRHLKTH), 435–457 (HRCHNCGKSFSRLTALTLHQRTH), 463–485 (FKCNYCGKSFRQRPSLVIHLRIH), and 491–513 (YKCTHCSKSFRQRAGLIMHQVTH).

It belongs to the krueppel C2H2-type zinc-finger protein family.

The protein resides in the nucleus. Its function is as follows. May be involved in transcriptional regulation. The protein is Zinc finger protein 449 (ZNF449) of Homo sapiens (Human).